A 500-amino-acid polypeptide reads, in one-letter code: Probable cytosol aminopeptidase (500 aa).

Residues lysine 264 and aspartate 269 each contribute to the Mn(2+) site. Lysine 276 is a catalytic residue. Residues aspartate 287, aspartate 346, and glutamate 348 each coordinate Mn(2+). Arginine 350 is an active-site residue.

It belongs to the peptidase M17 family. Requires Mn(2+) as cofactor.

Its subcellular location is the cytoplasm. The enzyme catalyses Release of an N-terminal amino acid, Xaa-|-Yaa-, in which Xaa is preferably Leu, but may be other amino acids including Pro although not Arg or Lys, and Yaa may be Pro. Amino acid amides and methyl esters are also readily hydrolyzed, but rates on arylamides are exceedingly low.. It carries out the reaction Release of an N-terminal amino acid, preferentially leucine, but not glutamic or aspartic acids.. Its function is as follows. Presumably involved in the processing and regular turnover of intracellular proteins. Catalyzes the removal of unsubstituted N-terminal amino acids from various peptides. The polypeptide is Probable cytosol aminopeptidase (Nitrobacter winogradskyi (strain ATCC 25391 / DSM 10237 / CIP 104748 / NCIMB 11846 / Nb-255)).